A 234-amino-acid chain; its full sequence is UPF0309 protein lmo0025 (234 aa).

Residues 31–205 enclose the SIS domain; the sequence is VADSIMNDGI…ELMLEKGYTP (175 aa).

Belongs to the UPF0309 family.

This chain is UPF0309 protein lmo0025, found in Listeria monocytogenes serovar 1/2a (strain ATCC BAA-679 / EGD-e).